The chain runs to 196 residues: Large ribosomal subunit protein bL9 (196 aa).

The segment at 172 to 196 is disordered; it reads NESARPEAFFDPEAEIEQEEGEENA. Acidic residues predominate over residues 181–196; it reads FDPEAEIEQEEGEENA.

This sequence belongs to the bacterial ribosomal protein bL9 family.

Functionally, binds to the 23S rRNA. This chain is Large ribosomal subunit protein bL9, found in Chelativorans sp. (strain BNC1).